A 620-amino-acid chain; its full sequence is UvrABC system protein C (620 aa).

The region spanning 13-92 is the GIY-YIG domain; the sequence is DKPGVYIMKN…IKKYSPRYNI (80 aa). The UVR domain maps to 204 to 239; it reads TSIIKNLKLEMEKAAEELEFEKAAKIRDRILAIELI.

It belongs to the UvrC family. As to quaternary structure, interacts with UvrB in an incision complex.

The protein localises to the cytoplasm. Functionally, the UvrABC repair system catalyzes the recognition and processing of DNA lesions. UvrC both incises the 5' and 3' sides of the lesion. The N-terminal half is responsible for the 3' incision and the C-terminal half is responsible for the 5' incision. The protein is UvrABC system protein C of Clostridium perfringens (strain SM101 / Type A).